Here is a 389-residue protein sequence, read N- to C-terminus: MWIKGKAWFNNSIDTICIQIDRFIKNIKKDCKPDIEFKENQLILPASIDMHVHVRGAQLSYKETVATATSEAAYGGIGLIIDMPNTLPPVNTYERVIERIREFENYSRTDFGIYSGVTKEIEKIDTLPIAGYKIYPEDLDRTETKVLLEKSKKLKVLHPEIPLALKVPRKLRNIWMEIAALHYVQGNVHVTHITNYETVKIAKELGFSTDITPHHLLVNGERDCITKVNPPIRDYLTRLGLWKALFEVDTVVSDHAPHSKEEKNLNYDLCPPGIAAVSFTTPFIYSLVFKDLLNIERAVNLLSKNPAKILNIPYGEIRIGYVANFTIISKNDWKYRTKFSKVTETPLDNFPLEAKVEFTIVQGKIAFDGKNVLPIRGVNAFDKSSRYPV.

Zn(2+)-binding residues include H51 and H53. Residues 53-55 (HVR) and N85 each bind substrate. The Zn(2+) site is built by K133, H158, H192, and D254. K133 bears the N6-carboxylysine mark. D254 is an active-site residue. Substrate-binding positions include H258 and 272 to 273 (PG).

Belongs to the metallo-dependent hydrolases superfamily. DHOase family. Class I DHOase subfamily. The cofactor is Zn(2+).

It catalyses the reaction (S)-dihydroorotate + H2O = N-carbamoyl-L-aspartate + H(+). It participates in pyrimidine metabolism; UMP biosynthesis via de novo pathway; (S)-dihydroorotate from bicarbonate: step 3/3. Functionally, catalyzes the reversible cyclization of carbamoyl aspartate to dihydroorotate. The protein is Dihydroorotase of Sulfurisphaera tokodaii (strain DSM 16993 / JCM 10545 / NBRC 100140 / 7) (Sulfolobus tokodaii).